The chain runs to 642 residues: Envelope glycoprotein (642 aa).

The N-terminal stretch at 1-34 (MESPTHPKPSKDKTLSWNLAFLVGILFTIDIGMA) is a signal peptide. Residues 35-586 (NPSPHQIYNV…FNKSPWFTTL (552 aa)) lie on the Extracellular side of the membrane. N-linked (GlcNAc...) asparagine; by host glycans are attached at residues Asn43 and Asn58. 2 disulfide bridges follow: Cys125/Cys147 and Cys139/Cys152. The segment at 233–283 (PPQAMGPNLVLPDQKPPSRQSQTGSKVATQRPQTNESAPRSVAPTTMGPKR) is disordered. Residues 249–270 (PSRQSQTGSKVATQRPQTNESA) show a composition bias toward polar residues. Asn267, Asn302, and Asn307 each carry an N-linked (GlcNAc...) asparagine; by host glycan. 3 cysteine pairs are disulfide-bonded: Cys312-Cys315, Cys312-Cys539, and Cys531-Cys538. A CXXC motif is present at residues 312–315 (CWLC). Asn334, Asn374, Asn390, and Asn410 each carry an N-linked (GlcNAc...) asparagine; by host glycan. Residues 448-468 (ISLTVALMLGGLTVGGIAAGV) form a fusion peptide region. 2 coiled-coil regions span residues 476–525 (LETA…ILFL) and 535–571 (KEECCFYADHTGLVRDNMAKLRERLKQRQQLFDSQQG). The interval 514–530 (LQNRRGLDILFLQEGGL) is immunosuppression. Residues 531–539 (CAALKEECC) carry the CX6CC motif. The helical transmembrane segment at 587-607 (ISSIMGPLLILLLILLFGPCI) threads the bilayer. The S-palmitoyl cysteine; by host moiety is linked to residue Cys606. Residues 608–642 (LNRLVQFVKDRISVVQALILTQQYQQIKQYDPDRP) lie on the Cytoplasmic side of the membrane.

The mature envelope protein (Env) consists of a trimer of SU-TM heterodimers attached by a labile interchain disulfide bond. In terms of processing, specific enzymatic cleavages in vivo yield mature proteins. Envelope glycoproteins are synthesized as an inactive precursor that is N-glycosylated and processed likely by host cell furin or by a furin-like protease in the Golgi to yield the mature SU and TM proteins. The cleavage site between SU and TM requires the minimal sequence [KR]-X-[KR]-R. The R-peptide is released from the C-terminus of the cytoplasmic tail of the TM protein upon particle formation as a result of proteolytic cleavage by the viral protease. Cleavage of this peptide is required for TM to become fusogenic. Post-translationally, the CXXC motif is highly conserved across a broad range of retroviral envelope proteins. It is thought to participate in the formation of a labile disulfide bond possibly with the CX6CC motif present in the transmembrane protein. Isomerization of the intersubunit disulfide bond to an SU intrachain disulfide bond is thought to occur upon receptor recognition in order to allow membrane fusion. The transmembrane protein is palmitoylated. In terms of processing, the R-peptide is palmitoylated.

Its subcellular location is the virion membrane. The protein resides in the host cell membrane. In terms of biological role, the surface protein (SU) attaches the virus to the host cell by binding to its receptor. This interaction triggers the refolding of the transmembrane protein (TM) and is thought to activate its fusogenic potential by unmasking its fusion peptide. Fusion occurs at the host cell plasma membrane. Its function is as follows. The transmembrane protein (TM) acts as a class I viral fusion protein. Under the current model, the protein has at least 3 conformational states: pre-fusion native state, pre-hairpin intermediate state, and post-fusion hairpin state. During viral and target cell membrane fusion, the coiled coil regions (heptad repeats) assume a trimer-of-hairpins structure, positioning the fusion peptide in close proximity to the C-terminal region of the ectodomain. The formation of this structure appears to drive apposition and subsequent fusion of viral and target cell membranes. Membranes fusion leads to delivery of the nucleocapsid into the cytoplasm. The protein is Envelope glycoprotein (env) of Felidae (cat family).